Reading from the N-terminus, the 545-residue chain is Ribulokinase (545 aa).

It belongs to the ribulokinase family.

It catalyses the reaction D-ribulose + ATP = D-ribulose 5-phosphate + ADP + H(+). The catalysed reaction is L-ribulose + ATP = L-ribulose 5-phosphate + ADP + H(+). It functions in the pathway carbohydrate degradation; L-arabinose degradation via L-ribulose; D-xylulose 5-phosphate from L-arabinose (bacterial route): step 2/3. The chain is Ribulokinase from Staphylococcus aureus (strain USA300).